Consider the following 153-residue polypeptide: SsrA-binding protein (153 aa).

The segment at 132–153 (REKDWLRERERVMKHDTRRRSD) is disordered.

Belongs to the SmpB family.

The protein resides in the cytoplasm. Functionally, required for rescue of stalled ribosomes mediated by trans-translation. Binds to transfer-messenger RNA (tmRNA), required for stable association of tmRNA with ribosomes. tmRNA and SmpB together mimic tRNA shape, replacing the anticodon stem-loop with SmpB. tmRNA is encoded by the ssrA gene; the 2 termini fold to resemble tRNA(Ala) and it encodes a 'tag peptide', a short internal open reading frame. During trans-translation Ala-aminoacylated tmRNA acts like a tRNA, entering the A-site of stalled ribosomes, displacing the stalled mRNA. The ribosome then switches to translate the ORF on the tmRNA; the nascent peptide is terminated with the 'tag peptide' encoded by the tmRNA and targeted for degradation. The ribosome is freed to recommence translation, which seems to be the essential function of trans-translation. The chain is SsrA-binding protein from Bordetella avium (strain 197N).